Here is a 388-residue protein sequence, read N- to C-terminus: Chorismate synthase (388 aa).

Positions 39 and 45 each coordinate NADP(+). FMN-binding positions include 130-132 (RSS), 251-252 (NA), glycine 296, 311-315 (KPIPT), and arginine 337.

Belongs to the chorismate synthase family. In terms of assembly, homotetramer. FMNH2 serves as cofactor.

It catalyses the reaction 5-O-(1-carboxyvinyl)-3-phosphoshikimate = chorismate + phosphate. It participates in metabolic intermediate biosynthesis; chorismate biosynthesis; chorismate from D-erythrose 4-phosphate and phosphoenolpyruvate: step 7/7. Its function is as follows. Catalyzes the anti-1,4-elimination of the C-3 phosphate and the C-6 proR hydrogen from 5-enolpyruvylshikimate-3-phosphate (EPSP) to yield chorismate, which is the branch point compound that serves as the starting substrate for the three terminal pathways of aromatic amino acid biosynthesis. This reaction introduces a second double bond into the aromatic ring system. This is Chorismate synthase from Lactococcus lactis subsp. cremoris (strain SK11).